A 286-amino-acid polypeptide reads, in one-letter code: ATP synthase gamma chain (286 aa).

This sequence belongs to the ATPase gamma chain family. F-type ATPases have 2 components, CF(1) - the catalytic core - and CF(0) - the membrane proton channel. CF(1) has five subunits: alpha(3), beta(3), gamma(1), delta(1), epsilon(1). CF(0) has three main subunits: a, b and c.

The protein resides in the cell inner membrane. Its function is as follows. Produces ATP from ADP in the presence of a proton gradient across the membrane. The gamma chain is believed to be important in regulating ATPase activity and the flow of protons through the CF(0) complex. The protein is ATP synthase gamma chain of Shewanella putrefaciens (strain CN-32 / ATCC BAA-453).